The primary structure comprises 211 residues: Ras-related protein Rab-38 (211 aa).

Positions 19, 20, 21, 22, 23, 24, 35, 36, 38, and 41 each coordinate GTP. Thr23 is a Mg(2+) binding site. Positions 32 to 46 (QNFSSHYRATIGVDF) match the Switch 1 motif. Thr41 and Asp65 together coordinate Mg(2+). 5 residues coordinate GTP: Gly68, Lys128, Asp130, Ala160, and Lys161. Positions 68–81 (GQERFGNMTRVYYR) match the Switch 2 motif. Cys205 carries the S-palmitoyl cysteine lipid modification. Cys208 carries the S-geranylgeranyl cysteine lipid modification.

It belongs to the small GTPase superfamily. Rab family. Interacts with ANKRD27. Requires Mg(2+) as cofactor.

It localises to the cell membrane. The protein localises to the cytoplasmic vesicle. Its subcellular location is the phagosome. The protein resides in the phagosome membrane. It is found in the melanosome. It localises to the melanosome membrane. It carries out the reaction GTP + H2O = GDP + phosphate + H(+). With respect to regulation, regulated by guanine nucleotide exchange factors (GEFs) including the BLOC-3 complex composed of HPS1 and HPS4 which promote the exchange of bound GDP for free GTP. Regulated by GTPase activating proteins (GAPs) including SGSM2 which increase the GTP hydrolysis activity. Inhibited by GDP dissociation inhibitors (GDIs). Functionally, the small GTPases Rab are key regulators of intracellular membrane trafficking, from the formation of transport vesicles to their fusion with membranes. Rabs cycle between an inactive GDP-bound form and an active GTP-bound form that is able to recruit to membranes different sets of downstream effectors directly responsible for vesicle formation, movement, tethering and fusion. RAB38 plays a role in the maturation of phagosomes that engulf pathogens, such as S.aureus and Mycobacterium. May be involved in melanosomal transport and docking. Involved in the proper sorting of TYRP1. Involved in peripheral melanosomal distribution of TYRP1 in melanocytes; the function, which probably is implicating vesicle-trafficking, includes cooperation with ANKRD27 and VAMP7. Plays an important role in the control of melanin production and melanosome biogenesis. In concert with RAB32, regulates the proper trafficking of melanogenic enzymes TYR, TYRP1 and DCT/TYRP2 to melanosomes in melanocytes. The sequence is that of Ras-related protein Rab-38 from Mus musculus (Mouse).